Reading from the N-terminus, the 779-residue chain is Probable ATP-dependent RNA helicase DHX40 (779 aa).

The tract at residues 1 to 53 is disordered; that stretch reads MSRFPAVAGRAPRRQEEGERSRDLQEERPSAVCIADREEKGCTSQEGGTTPTF. Basic and acidic residues predominate over residues 13-41; it reads RRQEEGERSRDLQEERPSAVCIADREEKG. Polar residues predominate over residues 42-53; that stretch reads CTSQEGGTTPTF. A Helicase ATP-binding domain is found at 63–231; that stretch reads IQAVRDNSFL…FGNCPIFDIP (169 aa). 76–83 is a binding site for ATP; that stretch reads GNTGSGKT. The DEAH box signature appears at 173–176; sequence DEAH. In terms of domain architecture, Helicase C-terminal spans 263–442; it reads TMDIHLNEMA…SVVLTLKCLA (180 aa). Residues 737–779 are disordered; the sequence is SKDVLKKMQRRNDDKSISDARARFLERKQQRTQDHSDTRKETG.

The protein belongs to the DEAD box helicase family. DEAH subfamily.

The catalysed reaction is ATP + H2O = ADP + phosphate + H(+). Probable ATP-dependent RNA helicase. The polypeptide is Probable ATP-dependent RNA helicase DHX40 (DHX40) (Pongo abelii (Sumatran orangutan)).